Reading from the N-terminus, the 308-residue chain is MKDDINQEITFRKLSVFMMFMAKGNIARTAEAMKLSSVSVHRALHTLEEGVGCPLFVHKGRNLLPLQAAWTLLEYCQDVISLMNRGLEATRKVAGVGQGRLRIGTLYSLTLETVPRIIMGMKLRRPELELDLTMGSNQMLLDMLEDDALDAILIATNEGEFNNTAFDVVPLFEDDIFLAAPATERLDASRLADLRDYADRKFVSLAEGFATYAGFREAFHIAGFEPEIVTRVNDIFSMISLVQAGVGFALLPGRMKKVYEKDVQLLKLAEPYQMRQLISIVYSHHRERDADLLALAAEGRMYARSINR.

The 58-residue stretch at 9–66 (ITFRKLSVFMMFMAKGNIARTAEAMKLSSVSVHRALHTLEEGVGCPLFVHKGRNLLPL) folds into the HTH lysR-type domain. A DNA-binding region (H-T-H motif) is located at residues 26-45 (IARTAEAMKLSSVSVHRALH).

This sequence belongs to the LysR transcriptional regulatory family.

Transcriptional regulator of the mau genes for malonate utilization. This chain is Malonate utilization transcriptional regulator (mauR), found in Klebsiella pneumoniae.